We begin with the raw amino-acid sequence, 381 residues long: Trans-enoyl reductase iliB (381 aa).

50-53 serves as a coordination point for NADP(+); sequence VDGK. 145-152 contacts substrate; it reads ATLATVGL. NADP(+) is bound by residues 213–216, Y231, and 278–279; these read SPGS and LD. 298 to 302 is a substrate binding site; the sequence is TYTQF. Residue 367–368 coordinates NADP(+); sequence IS.

The protein belongs to the zinc-containing alcohol dehydrogenase family. In terms of assembly, monomer.

It carries out the reaction N-[(4E,6E,10S,12Z,14E)-6,10-dimethyl-3-oxohexadeca-4,6,12,14-tetraenoyl]-L-tyrosyl-[ACP] = (3E,5S)-3-[(2E,4E,8S,10E,12Z)-1-hydroxy-4,8-dimethyltetradeca-2,4,10,12-tetraen-1-ylidene]-5-[(4-hydroxyphenyl)methyl]pyrrolidine-2,4-dione + holo-[ACP] + H(+). It participates in mycotoxin biosynthesis. Its function is as follows. Trans-enoyl reductase; part of the gene cluster that mediates the biosynthesis of ilicicolin H, a 4-hydroxy-2-pyridonealkaloid that has potent and broad antifungal activities by inhibiting the mitochondrial respiration chain. IliB collaborates with the hybrid PKS-NRPS synthetase iliA to assemble the backbone of ilicicolin H. The PKS portion of iliA and trans-acting enoyl reductase iliB work together to construct an octaketide, and two methyl groups are introduced by the MT domain of iliA during the chain assembly. The nascent chain is then condensed with tyrosine, catalyzed by the iliA C domain, and the resulting PKS-NRPS hybrid is offloaded by the iliA RED domain to form an advanced tetramic acid intermediate. The biosynthesis of ilicicolin H starts with formation of the tetramic acid by the hybrid PKS-NRPS synthetase iliA with the partnering trans-enoyl reductase iliB since iliA lacks a designated enoylreductase (ER) domain. The cytochrome P450 monooxygenase iliC then catalyzes the ring expansion of the tetramate to the acyclic 2-pyridone. The pericyclase iliD further converts the acyclic 2-pyridone into 8-epi-ilicicolin H. 8-epi-ilicicolin H might then spontaneously convert to ilicicolin H since ilicicolin H is produced in the absence of the epimerase iliE, in contrast to what was observed for the Talaromyces variabilis ilicolin H biosynthetic pathway. In Neonectria sp. (strain DH2), this protein is Trans-enoyl reductase iliB.